Reading from the N-terminus, the 307-residue chain is Oxygen-dependent coproporphyrinogen-III oxidase (307 aa).

Residue S99 coordinates substrate. Residues H103 and H113 each contribute to the a divalent metal cation site. Residue H113 is the Proton donor of the active site. Residue 115 to 117 coordinates substrate; the sequence is NVR. Residues H152 and H182 each contribute to the a divalent metal cation site. Residues 247 to 282 are important for dimerization; that stretch reads YVEFNLVFDRGTLFGLQSGGRTESILLSMPPTAGWR. 265–267 provides a ligand contact to substrate; sequence GGR.

It belongs to the aerobic coproporphyrinogen-III oxidase family. As to quaternary structure, homodimer. A divalent metal cation is required as a cofactor.

Its subcellular location is the cytoplasm. The catalysed reaction is coproporphyrinogen III + O2 + 2 H(+) = protoporphyrinogen IX + 2 CO2 + 2 H2O. It functions in the pathway porphyrin-containing compound metabolism; protoporphyrin-IX biosynthesis; protoporphyrinogen-IX from coproporphyrinogen-III (O2 route): step 1/1. In terms of biological role, involved in the heme biosynthesis. Catalyzes the aerobic oxidative decarboxylation of propionate groups of rings A and B of coproporphyrinogen-III to yield the vinyl groups in protoporphyrinogen-IX. The sequence is that of Oxygen-dependent coproporphyrinogen-III oxidase from Burkholderia mallei (strain SAVP1).